The sequence spans 289 residues: Rhodopsin (289 aa).

The Extracellular segment spans residues 1–7 (YLVSPAA). A helical membrane pass occupies residues 8 to 32 (YAALGAYMFLLILVGFPVNFLTLYV). Residues 33–44 (TLDHKKLRTPLN) are Cytoplasmic-facing. A helical membrane pass occupies residues 45-67 (YILLNLAVADLFMVLGGFTTTMY). The Extracellular segment spans residues 68–81 (TSMHGYFVLGRLGC). An intrachain disulfide couples Cys81 to Cys158. A helical membrane pass occupies residues 82–104 (NLEGFFATLGGEIALWSLVVLAI). The short motif at 105 to 107 (ERW) is the 'Ionic lock' involved in activated form stabilization element. At 105–123 (ERWIVVCKPISNFRFTEDH) the chain is on the cytoplasmic side. A helical transmembrane segment spans residues 124 to 144 (AIMGLAFSWVMALTCAVPPLV). Topologically, residues 145-173 (GWSRYIPEGMQCSCGVDYYTRAEGFNTES) are extracellular. A helical transmembrane segment spans residues 174–195 (FVLYMFTVHFLIPLSVIFFCYG). Over 196-223 (RLLCAVKEAAAAQQESETTQRAEKEVSR) the chain is Cytoplasmic. The chain crosses the membrane as a helical span at residues 224–245 (MVVLMVIGFLVCWLPYASVAWW). Over 246–257 (IFCNQGSEFGPI) the chain is Extracellular. A helical membrane pass occupies residues 258–279 (FMTLPAFFAKTSAIYNPLIYIC). Lys267 carries the post-translational modification N6-(retinylidene)lysine. Residues 280-289 (MNKQFRHCMI) lie on the Cytoplasmic side of the membrane.

The protein belongs to the G-protein coupled receptor 1 family. Opsin subfamily. Post-translationally, phosphorylated on some or all of the serine and threonine residues present in the C-terminal region. In terms of processing, contains one covalently linked retinal chromophore.

The protein resides in the membrane. Its subcellular location is the cell projection. It localises to the cilium. It is found in the photoreceptor outer segment. Its function is as follows. Photoreceptor required for image-forming vision at low light intensity. While most salt water fish species use retinal as chromophore, most freshwater fish use 3-dehydroretinal, or a mixture of retinal and 3-dehydroretinal. Light-induced isomerization of 11-cis to all-trans retinal triggers a conformational change that activates signaling via G-proteins. Subsequent receptor phosphorylation mediates displacement of the bound G-protein alpha subunit by arrestin and terminates signaling. The chain is Rhodopsin (rho) from Procottus jeittelesii (Red sculpin).